The chain runs to 505 residues: 2,3-bisphosphoglycerate-independent phosphoglycerate mutase (505 aa).

D11 and S61 together coordinate Mn(2+). S61 (phosphoserine intermediate) is an active-site residue. Substrate contacts are provided by residues H122, 152–153, R183, R189, 259–262, and K332; these read RD and RTDR. Positions 399, 403, 440, 441, and 458 each coordinate Mn(2+).

The protein belongs to the BPG-independent phosphoglycerate mutase family. As to quaternary structure, monomer. Requires Mn(2+) as cofactor.

The catalysed reaction is (2R)-2-phosphoglycerate = (2R)-3-phosphoglycerate. Its pathway is carbohydrate degradation; glycolysis; pyruvate from D-glyceraldehyde 3-phosphate: step 3/5. Functionally, catalyzes the interconversion of 2-phosphoglycerate and 3-phosphoglycerate. The protein is 2,3-bisphosphoglycerate-independent phosphoglycerate mutase of Flavobacterium psychrophilum (strain ATCC 49511 / DSM 21280 / CIP 103535 / JIP02/86).